We begin with the raw amino-acid sequence, 1072 residues long: LRR receptor-like serine/threonine-protein kinase RGI5 (1072 aa).

A signal peptide spans 1-21 (MERERSNFFFLFLFCSWVSMA). At 22 to 706 (QPTLSLSSDG…NGVKSPKIVA (685 aa)) the chain is on the extracellular side. A disulfide bridge links Cys-56 with Cys-63. LRR repeat units follow at residues 66-89 (DNRV…DLSS), 90-113 (LSSL…SFGK), 114-138 (LTHL…LGRL), 140-162 (TLQF…ISNL), 164-185 (ALQV…SFGS), 187-211 (VSLQ…LGFL), 212-234 (KNLT…TFGN), 235-259 (LVNL…LGLC), 260-283 (SELR…LGKL), 285-307 (KITS…ISNC), 308-331 (SSLV…LGKL), 332-355 (VWLE…LSNC), 356-379 (SSLI…IGNL), 381-402 (SLQS…SFGN), 403-427 (CTDL…LFSL), 429-451 (RLSK…VAKC), 452-475 (QSLV…IGEL), 477-499 (NLVF…ISNI), 500-523 (TVLE…LGNL), 524-546 (VNLE…SFGN), 548-571 (SYLN…IKNL), 572-595 (QKLT…LGQV), 597-619 (SLTI…TFSD), 620-642 (LTQL…VLGS), and 643-667 (LTSL…PFFK). N-linked (GlcNAc...) asparagine glycosylation is found at Asn-80, Asn-97, and Asn-102. Positions 171-172 (QD) match the Small peptide recognition motif. N-linked (GlcNAc...) asparagine glycosylation occurs at Asn-176. The Small peptide recognition motif lies at 193 to 196 (RLGG). Asn-213 carries an N-linked (GlcNAc...) asparagine glycan. 3 consecutive short sequence motifs (small peptide recognition) follow at residues 216 to 221 (TLGFAA), Tyr-244, and 266 to 268 (YLH). A glycan (N-linked (GlcNAc...) asparagine) is linked at Asn-306. 2 short sequence motifs (small peptide recognition) span residues 314 to 317 (DVSA) and 336 to 338 (QLQ). The N-linked (GlcNAc...) asparagine glycan is linked to Asn-354. The Small peptide recognition signature appears at 384–388 (SFFLW). N-linked (GlcNAc...) asparagine glycosylation is present at Asn-402. 3 consecutive short sequence motifs (small peptide recognition) follow at residues 410 to 413 (DLSR), 432 to 436 (KLLLL), and 456 to 458 (RLR). Asn-498 is a glycosylation site (N-linked (GlcNAc...) asparagine). An N-linked (GlcNAc...) asparagine glycan is attached at Asn-546. 2 N-linked (GlcNAc...) asparagine glycosylation sites follow: Asn-650 and Asn-655. Residues 707–727 (LTAVILASITIAILAAWLLIL) form a helical membrane-spanning segment. Residues 728–1072 (RNNHLYKTSQ…SQPLIKPSSS (345 aa)) lie on the Cytoplasmic side of the membrane. Position 764 is a phosphothreonine (Thr-764). A Protein kinase domain is found at 772–1067 (LTDENVIGKG…EWGKTSQPLI (296 aa)). ATP contacts are provided by residues 778-786 (IGKGCSGIV) and Lys-800. Residues Tyr-851 and Tyr-887 each carry the phosphotyrosine modification. Asp-900 functions as the Proton acceptor in the catalytic mechanism. Ser-936 carries the post-translational modification Phosphoserine. Residues Tyr-944 and Tyr-951 each carry the phosphotyrosine modification. At Thr-952 the chain carries Phosphothreonine.

The protein belongs to the protein kinase superfamily. Ser/Thr protein kinase family. Binds to RGF1; this interaction triggers the formation of heterodimers with SERK1. Phosphorylated and ubiquitinated upon interaction with RGF1, thus leading to activation a subsequent degradation. Post-translationally, autophosphorylated. As to expression, expressed in roots and hypocotyls.

Its subcellular location is the membrane. It catalyses the reaction L-seryl-[protein] + ATP = O-phospho-L-seryl-[protein] + ADP + H(+). The catalysed reaction is L-threonyl-[protein] + ATP = O-phospho-L-threonyl-[protein] + ADP + H(+). Functionally, together with RGI1, RGI2, RGI3 and RGI4, acts as a receptor of RGF1, a peptide hormone that maintains the postembryonic root stem cell niche by regulating the expression levels and patterns of the transcription factor PLETHORA (PLT). Links RGF1 signal with its downstream components. This Arabidopsis thaliana (Mouse-ear cress) protein is LRR receptor-like serine/threonine-protein kinase RGI5.